Here is a 440-residue protein sequence, read N- to C-terminus: Ribulose bisphosphate carboxylase large chain (440 aa).

Lys-4 is modified (N6,N6,N6-trimethyllysine). Residues Asn-113 and Thr-163 each coordinate substrate. Catalysis depends on Lys-165, which acts as the Proton acceptor. Lys-167 lines the substrate pocket. Mg(2+) is bound by residues Lys-191, Asp-193, and Glu-194. Lys-191 carries the post-translational modification N6-carboxylysine. His-284 acts as the Proton acceptor in catalysis. Substrate-binding residues include Arg-285, His-317, and Ser-369.

This sequence belongs to the RuBisCO large chain family. Type I subfamily. As to quaternary structure, heterohexadecamer of 8 large chains and 8 small chains; disulfide-linked. The disulfide link is formed within the large subunit homodimers. The cofactor is Mg(2+). In terms of processing, the disulfide bond which can form in the large chain dimeric partners within the hexadecamer appears to be associated with oxidative stress and protein turnover.

The protein localises to the plastid. It localises to the chloroplast. The enzyme catalyses 2 (2R)-3-phosphoglycerate + 2 H(+) = D-ribulose 1,5-bisphosphate + CO2 + H2O. It catalyses the reaction D-ribulose 1,5-bisphosphate + O2 = 2-phosphoglycolate + (2R)-3-phosphoglycerate + 2 H(+). Its function is as follows. RuBisCO catalyzes two reactions: the carboxylation of D-ribulose 1,5-bisphosphate, the primary event in carbon dioxide fixation, as well as the oxidative fragmentation of the pentose substrate in the photorespiration process. Both reactions occur simultaneously and in competition at the same active site. In Matteuccia struthiopteris (European ostrich fern), this protein is Ribulose bisphosphate carboxylase large chain.